A 447-amino-acid chain; its full sequence is uncharacterized protein (447 aa).

The FAD-binding PCMH-type domain occupies 29–201 (VDVYPLVFVF…TQYTFKVHRA (173 aa)).

Belongs to the oxygen-dependent FAD-linked oxidoreductase family. It depends on FAD as a cofactor.

It localises to the spore coat. This is an uncharacterized protein from Bacillus subtilis (strain 168).